The sequence spans 133 residues: Small ribosomal subunit protein uS8 (133 aa).

This sequence belongs to the universal ribosomal protein uS8 family. In terms of assembly, part of the 30S ribosomal subunit. Contacts proteins S5 and S12.

Functionally, one of the primary rRNA binding proteins, it binds directly to 16S rRNA central domain where it helps coordinate assembly of the platform of the 30S subunit. The protein is Small ribosomal subunit protein uS8 of Prochlorococcus marinus (strain MIT 9313).